Consider the following 182-residue polypeptide: Large ribosomal subunit protein bL25 (182 aa).

It belongs to the bacterial ribosomal protein bL25 family. CTC subfamily. In terms of assembly, part of the 50S ribosomal subunit; part of the 5S rRNA/L5/L18/L25 subcomplex. Contacts the 5S rRNA. Binds to the 5S rRNA independently of L5 and L18.

This is one of the proteins that binds to the 5S RNA in the ribosome where it forms part of the central protuberance. This chain is Large ribosomal subunit protein bL25, found in Borreliella burgdorferi (strain ATCC 35210 / DSM 4680 / CIP 102532 / B31) (Borrelia burgdorferi).